The chain runs to 341 residues: Fe-S cluster assembly protein DRE2 (341 aa).

An N-terminal SAM-like domain region spans residues 1 to 157 (MNTLLLLHPT…FKKLSSPPTL (157 aa)). A disordered region spans residues 151–171 (LSSPPTLTDSSEADEDEESQL). The interval 157–204 (LTDSSEADEDEESQLNEKLKGSKLIYFDESSDDEIIDEDELLRDDDGA) is linker. Acidic residues predominate over residues 161 to 170 (SEADEDEESQ). Residues Cys-215, Cys-227, Cys-230, and Cys-232 each contribute to the [2Fe-2S] cluster site. Residues 215 to 232 (CALPNGKRRKKACKDCTC) are fe-S binding site A. [4Fe-4S] cluster contacts are provided by Cys-304, Cys-307, Cys-315, and Cys-318. 2 short sequence motifs (cx2C motif) span residues 304–307 (CGSC) and 315–318 (CDGC). Residues 304 to 318 (CGSCALGDAFRCDGC) form a fe-S binding site B region.

This sequence belongs to the anamorsin family. As to quaternary structure, monomer. Interacts with TAH18. Interacts with MIA40. The cofactor is [2Fe-2S] cluster. [4Fe-4S] cluster serves as cofactor.

Its subcellular location is the cytoplasm. The protein localises to the mitochondrion intermembrane space. Its function is as follows. Component of the cytosolic iron-sulfur (Fe-S) protein assembly (CIA) machinery required for the maturation of extramitochondrial Fe-S proteins. Part of an electron transfer chain functioning in an early step of cytosolic Fe-S biogenesis, facilitating the de novo assembly of a [4Fe-4S] cluster on the scaffold complex CFD1-NBP35. Electrons are transferred to DRE2 from NADPH via the FAD- and FMN-containing protein TAH18. TAH18-DRE2 are also required for the assembly of the diferric tyrosyl radical cofactor of ribonucleotide reductase (RNR), probably by providing electrons for reduction during radical cofactor maturation in the catalytic small subunit RNR2. The polypeptide is Fe-S cluster assembly protein DRE2 (Komagataella phaffii (strain GS115 / ATCC 20864) (Yeast)).